Here is a 402-residue protein sequence, read N- to C-terminus: Advanced glycosylation end product-specific receptor (402 aa).

An N-terminal signal peptide occupies residues Met-1–Gly-22. The Ig-like V-type domain occupies Gly-23–Lys-109. Residues Gly-23–Ala-340 are Extracellular-facing. Asn-25 and Asn-80 each carry an N-linked (GlcNAc...) asparagine glycan. 2 disulfide bridges follow: Cys-38/Cys-98 and Cys-143/Cys-206. 2 Ig-like C2-type domains span residues Pro-123–Asn-219 and Pro-233–Ser-315. The interval Gly-295–Gly-332 is disordered. The helical transmembrane segment at Leu-341–Trp-361 threads the bilayer. Topologically, residues Arg-362–Pro-402 are cytoplasmic. The tract at residues Gln-365–Pro-402 is disordered. A phosphoserine; by ATM mark is found at Ser-376 and Ser-389. Positions Ser-376 to Met-394 are enriched in acidic residues.

Constitutive homodimer; disulfide-linked. Forms homooligomers. Interacts with S100A1 and APP. Interacts with S100B, S100A12 and S100A14. Interacts with TIRAP. Interacts with HMGB1. Interacts with LGP2; this interaction plays an important role in AGER-mediated pro-inflammatory responses and cytokine release. Interacts with double-strand break repair protein MRE11 which is a core component of the MRN complex; the interaction enhances MRE11 endonuclease activity and promotes DNA repair. Interacts with the MCM2-7 complex via interaction with complex member MCM2; the interaction is increased following DNA replication stress and stabilizes the MCM2-7 complex at replication forks. Phosphorylated on its cytoplasmic domain by PKCzeta/PRKCZ upon ligand binding. Phosphorylated by ATM following DNA damage. In terms of processing, targeted by the ubiquitin E3 ligase subunit FBXO10 to mediate its ubiquitination and degradation. Isoform 1: Expressed at higher levels in the coronary arterioles in type 2 diabetic mice (at protein level). Endothelial cells. Expressed in lung, kidney, brain and heart. Most prevalent isoform with the highest level in heart. Isoform 2: Expressed in brain, lung, kidney and small intestine with the highest level in lung. Expressed in brain, lung, kidney and small intestine with the highest level in small intestine (at protein level). Detected in neurons of the cerebrum, bronchial epithelium, endothelial cells, tubular cells of kidney and epithelial cells of small intestine (at protein level). Expression is increased in the kidney of diabetic wild-type mice (at protein level), but not in the other tissues. Expressed only in kidney. Expression is increased in the kidney of diabetic mice. Isoform 3: Expressed in lung, kidney and heart. The second most prevalent isoform with the highest level in lung. Not expressed in brain. Isoform 4: Expressed at very low level in lung only. Isoform 5: Expressed at very low level in lung only. Isoform 6: Expressed at very low level in lung only. Isoform 7: Expressed at very low level in heart only. Isoform 8: Expressed at very low level in lung only. Isoform 9: Expressed at very low level in heart only. Isoform 10: Expressed in lung, brain, heart and kidney with a very high level in kidney. Isoform 11: Expressed in brain, kidney and heart. Not expressed in lung. Isoform 12: Expressed at very low level in lung and kidney. Isoform 13: Expressed at very low level in lung only.

The protein resides in the cell membrane. The protein localises to the cell projection. It is found in the phagocytic cup. It localises to the early endosome. Its subcellular location is the nucleus. The protein resides in the secreted. Functionally, cell surface pattern recognition receptor that senses endogenous stress signals with a broad ligand repertoire including advanced glycation end products, S100 proteins, high-mobility group box 1 protein/HMGB1, amyloid beta/APP oligomers, nucleic acids, histones, phospholipids and glycosaminoglycans. Advanced glycosylation end products are nonenzymatically glycosylated proteins which accumulate in vascular tissue in aging and at an accelerated rate in diabetes. These ligands accumulate at inflammatory sites during the pathogenesis of various diseases including diabetes, vascular complications, neurodegenerative disorders and cancers, and RAGE transduces their binding into pro-inflammatory responses. Upon ligand binding, uses TIRAP and MYD88 as adapters to transduce the signal ultimately leading to the induction of inflammatory cytokines IL6, IL8 and TNFalpha through activation of NF-kappa-B. Interaction with S100A12 on endothelium, mononuclear phagocytes, and lymphocytes triggers cellular activation, with generation of key pro-inflammatory mediators. Interaction with S100B after myocardial infarction may play a role in myocyte apoptosis by activating ERK1/2 and p53/TP53 signaling. Contributes to the translocation of amyloid-beta peptide (ABPP) across the cell membrane from the extracellular to the intracellular space in cortical neurons. ABPP-initiated RAGE signaling, especially stimulation of p38 mitogen-activated protein kinase (MAPK), has the capacity to drive a transport system delivering ABPP as a complex with RAGE to the intraneuronal space. Participates in endothelial albumin transcytosis together with HMGB1 through the RAGE/SRC/Caveolin-1 pathway, leading to endothelial hyperpermeability. Mediates the loading of HMGB1 in extracellular vesicles (EVs) that shuttle HMGB1 to hepatocytes by transferrin-mediated endocytosis and subsequently promote hepatocyte pyroptosis by activating the NLRP3 inflammasome. Binds to DNA and promotes extracellular hypomethylated DNA (CpG DNA) uptake by cells via the endosomal route to activate inflammatory responses. Mediates phagocytosis by non-professional phagocytes (NPP) and this is enhanced by binding to ligands including RNA, DNA, HMGB1 and histones. Promotes NPP-mediated phagocytosis of Saccharomyces cerevisiae spores by binding to RNA attached to the spore wall. Also promotes NPP-mediated phagocytosis of apoptotic cells. Following DNA damage, recruited to DNA double-strand break sites where it colocalizes with the MRN repair complex via interaction with double-strand break repair protein MRE11. Enhances the endonuclease activity of MRE11, promoting the end resection of damaged DNA. Promotes DNA damage repair in trophoblasts which enhances trophoblast invasion and contributes to placental development and maintenance. Protects cells from DNA replication stress by localizing to damaged replication forks where it stabilizes the MCM2-7 complex and promotes faithful progression of the replication fork. Is able to advanced glycosylation end product (AGE)-induce nuclear factor NF-kappa-B activation. Its function is as follows. Down-regulates receptor for advanced glycosylation end products (RAGE)-ligand induced signaling through various MAPK pathways including ERK1/2, p38 and SAPK/JNK. Significantly affects tumor cell properties through decreasing cell migration, invasion, adhesion and proliferation, and increasing cellular apoptosis. Exhibits drastic inhibition on tumorigenesis in vitro. This is Advanced glycosylation end product-specific receptor (Ager) from Mus musculus (Mouse).